The primary structure comprises 339 residues: Glyceraldehyde-3-phosphate dehydrogenase (339 aa).

Residues 12–13 (RI), Asp39, Arg84, and Ser127 contribute to the NAD(+) site. D-glyceraldehyde 3-phosphate-binding positions include 157-159 (SCT), Thr188, Arg203, 216-217 (TG), and Arg239. Residue Cys158 is the Nucleophile of the active site. Asn320 is a binding site for NAD(+).

The protein belongs to the glyceraldehyde-3-phosphate dehydrogenase family. Homotetramer.

Its subcellular location is the cytoplasm. It carries out the reaction D-glyceraldehyde 3-phosphate + phosphate + NAD(+) = (2R)-3-phospho-glyceroyl phosphate + NADH + H(+). It functions in the pathway carbohydrate degradation; glycolysis; pyruvate from D-glyceraldehyde 3-phosphate: step 1/5. Its function is as follows. Catalyzes the oxidative phosphorylation of glyceraldehyde 3-phosphate (G3P) to 1,3-bisphosphoglycerate (BPG) using the cofactor NAD. The first reaction step involves the formation of a hemiacetal intermediate between G3P and a cysteine residue, and this hemiacetal intermediate is then oxidized to a thioester, with concomitant reduction of NAD to NADH. The reduced NADH is then exchanged with the second NAD, and the thioester is attacked by a nucleophilic inorganic phosphate to produce BPG. This is Glyceraldehyde-3-phosphate dehydrogenase (gapA) from Mycobacterium leprae (strain TN).